A 189-amino-acid chain; its full sequence is GTPase HRas (189 aa).

Residue Gly-10–Ser-17 participates in GTP binding. The Effector region motif lies at Tyr-32–Tyr-40. GTP-binding positions include Asp-57–Gln-61 and Asn-116–Asp-119. S-palmitoyl cysteine; by host attachment occurs at residues Cys-181 and Cys-184. At Cys-186 the chain carries Cysteine methyl ester; by host. A lipid anchor (S-farnesyl cysteine; by host) is attached at Cys-186. The propeptide at Val-187–Ser-189 is removed in mature form.

Belongs to the small GTPase superfamily. Ras family.

The protein localises to the host cell membrane. It carries out the reaction GTP + H2O = GDP + phosphate + H(+). Alternates between an inactive form bound to GDP and an active form bound to GTP. Activated by a guanine nucleotide-exchange factor (GEF) and inactivated by a GTPase-activating protein (GAP). This is GTPase HRas (H-RAS) from Mus musculus (Mouse).